A 180-amino-acid polypeptide reads, in one-letter code: Large ribosomal subunit protein uL5 (180 aa).

It belongs to the universal ribosomal protein uL5 family. In terms of assembly, part of the 50S ribosomal subunit; part of the 5S rRNA/L5/L18/L25 subcomplex. Contacts the 5S rRNA and the P site tRNA. Forms a bridge to the 30S subunit in the 70S ribosome.

In terms of biological role, this is one of the proteins that bind and probably mediate the attachment of the 5S RNA into the large ribosomal subunit, where it forms part of the central protuberance. In the 70S ribosome it contacts protein S13 of the 30S subunit (bridge B1b), connecting the 2 subunits; this bridge is implicated in subunit movement. Contacts the P site tRNA; the 5S rRNA and some of its associated proteins might help stabilize positioning of ribosome-bound tRNAs. The chain is Large ribosomal subunit protein uL5 from Rippkaea orientalis (strain PCC 8801 / RF-1) (Cyanothece sp. (strain PCC 8801)).